The following is a 358-amino-acid chain: uncharacterized protein (358 aa).

Zn(2+) is bound by residues Cys39, His61, Cys92, Cys95, Cys98, Cys106, and Asp157.

This sequence belongs to the zinc-containing alcohol dehydrogenase family. The cofactor is Zn(2+).

This is an uncharacterized protein from Escherichia coli (strain K12).